Here is a 138-residue protein sequence, read N- to C-terminus: Small ribosomal subunit protein uS11c (138 aa).

Residues Met1–Ala22 are disordered. The segment covering Ser9–Ala22 has biased composition (basic residues).

The protein belongs to the universal ribosomal protein uS11 family. Part of the 30S ribosomal subunit.

The protein resides in the plastid. Its subcellular location is the chloroplast. The polypeptide is Small ribosomal subunit protein uS11c (Solanum bulbocastanum (Wild potato)).